The primary structure comprises 504 residues: GTPase Der (504 aa).

An EngA-type G 1 domain is found at 3–166 (PVVALVGRPN…QVLAPLAEKL (164 aa)). Residues 9–16 (GRPNVGKS), 56–60 (DTGGI), and 118–121 (NKTD) contribute to the GTP site. Positions 171–190 (VDSDENVADDEQDEWDSDFD) are disordered. The span at 172 to 190 (DSDENVADDEQDEWDSDFD) shows a compositional bias: acidic residues. The EngA-type G 2 domain occupies 216–389 (IKIAIVGRPN…SIQEAYQCAT (174 aa)). GTP-binding positions include 222–229 (GRPNVGKS), 269–273 (DTAGV), and 334–337 (NKWD). The region spanning 390-474 (KKMTTSMLTR…PIRVLFQEGN (85 aa)) is the KH-like domain.

Belongs to the TRAFAC class TrmE-Era-EngA-EngB-Septin-like GTPase superfamily. EngA (Der) GTPase family. As to quaternary structure, associates with the 50S ribosomal subunit.

Its function is as follows. GTPase that plays an essential role in the late steps of ribosome biogenesis. This Glaesserella parasuis serovar 5 (strain SH0165) (Haemophilus parasuis) protein is GTPase Der.